Consider the following 144-residue polypeptide: Transcriptional regulator SlyA (144 aa).

The HTH marR-type domain maps to 2–135 (ESPLGSDLAR…LITLIAKLEH (134 aa)). Positions 49–72 (QIQLAKAIGIEQPSLVRTLDQLEE) form a DNA-binding region, H-T-H motif.

It belongs to the SlyA family. In terms of assembly, homodimer.

Functionally, transcription regulator that can specifically activate or repress expression of target genes. This chain is Transcriptional regulator SlyA, found in Shigella boydii serotype 18 (strain CDC 3083-94 / BS512).